The following is a 211-amino-acid chain: AETAPAAPADSVPASVEKPPAKKRGKKPVGLTGTSRKAPSASVSKLITEALSVSQERAGMSLAALKKALAAAGYDVEKNNSRIKLGLKSLVGKGILVQTRGTGASGSFKLSKKAAPEPRKGKVKKPAAAKTKKLVLSRDSKSPKSAKANKRAKKSRTTAAQKAARSGRKTKEAKVKQQRKSPAKARAAKPKAGNPKLTQQKTNPRKATNRK.

Residue A1 is modified to N-acetylalanine. A compositionally biased stretch (low complexity) spans 1-16 (AETAPAAPADSVPASV). A disordered region spans residues 1–42 (AETAPAAPADSVPASVEKPPAKKRGKKPVGLTGTSRKAPSAS). Positions 32 to 42 (TGTSRKAPSAS) are enriched in polar residues. In terms of domain architecture, H15 spans 39–112 (PSASVSKLIT…GASGSFKLSK (74 aa)). At R57 the chain carries Citrulline. Residues 101–211 (GTGASGSFKL…TNPRKATNRK (111 aa)) form a disordered region. The segment covering 121 to 135 (GKVKKPAAAKTKKLV) has biased composition (basic residues). Residue S142 is modified to Phosphoserine. A compositionally biased stretch (basic residues) spans 147-156 (KANKRAKKSR). Position 158 is a phosphothreonine (T158). A phosphoserine mark is found at S166 and S181. A compositionally biased stretch (basic residues) spans 176–189 (KQQRKSPAKARAAK).

The protein belongs to the histone H1/H5 family. Post-translationally, phosphorylated in early spermatids. In terms of processing, citrullination at Arg-57 (H1R54ci) by PADI4 takes place within the DNA-binding site of H1 and results in its displacement from chromatin and global chromatin decondensation, thereby promoting pluripotency and stem cell maintenance. Testis-specific.

The protein localises to the nucleus. It localises to the chromosome. Its function is as follows. Testis-specific histone H1 that forms less compacted chromatin compared to other H1 histone subtypes. Formation of more relaxed chromatin may be required to promote chromatin architecture required for proper chromosome regulation during meiosis, such as homologous recombination. Histones H1 act as linkers that bind to nucleosomes and compact polynucleosomes into a higher-order chromatin configuration. The chain is Histone H1t from Sus scrofa (Pig).